The sequence spans 429 residues: Xaa-Pro dipeptidase (429 aa).

Mn(2+) contacts are provided by aspartate 241, aspartate 252, histidine 334, glutamate 372, and glutamate 411.

The protein belongs to the peptidase M24B family. Bacterial-type prolidase subfamily. Mn(2+) serves as cofactor.

It carries out the reaction Xaa-L-Pro dipeptide + H2O = an L-alpha-amino acid + L-proline. Functionally, splits dipeptides with a prolyl residue in the C-terminal position. The polypeptide is Xaa-Pro dipeptidase (Marinobacter nauticus (strain ATCC 700491 / DSM 11845 / VT8) (Marinobacter aquaeolei)).